The chain runs to 445 residues: Methylthioribose-1-phosphate isomerase (445 aa).

The Proton donor role is filled by Asp286.

Belongs to the eIF-2B alpha/beta/delta subunits family. MtnA subfamily.

Its subcellular location is the cytoplasm. It is found in the nucleus. The enzyme catalyses 5-(methylsulfanyl)-alpha-D-ribose 1-phosphate = 5-(methylsulfanyl)-D-ribulose 1-phosphate. The protein operates within amino-acid biosynthesis; L-methionine biosynthesis via salvage pathway; L-methionine from S-methyl-5-thio-alpha-D-ribose 1-phosphate: step 1/6. Catalyzes the interconversion of methylthioribose-1-phosphate (MTR-1-P) into methylthioribulose-1-phosphate (MTRu-1-P). The polypeptide is Methylthioribose-1-phosphate isomerase (mri1) (Sclerotinia sclerotiorum (strain ATCC 18683 / 1980 / Ss-1) (White mold)).